The following is a 313-amino-acid chain: L-lactate dehydrogenase (313 aa).

NAD(+) contacts are provided by residues Val11, Asp32, Arg37, Tyr62, and 76 to 77 (GV). Substrate is bound by residues Gln79, Arg85, and 117-120 (NPVD). NAD(+)-binding positions include 115 to 117 (ASN) and Ser143. A substrate-binding site is contributed by 148–151 (DTAR). Residues Arg153 and His168 each coordinate beta-D-fructose 1,6-bisphosphate. The Proton acceptor role is filled by His175. Tyr221 is modified (phosphotyrosine). Position 230 (Thr230) interacts with substrate.

Belongs to the LDH/MDH superfamily. LDH family. As to quaternary structure, homotetramer.

It localises to the cytoplasm. It carries out the reaction (S)-lactate + NAD(+) = pyruvate + NADH + H(+). The protein operates within fermentation; pyruvate fermentation to lactate; (S)-lactate from pyruvate: step 1/1. Its activity is regulated as follows. Allosterically activated by fructose 1,6-bisphosphate (FBP). In terms of biological role, catalyzes the conversion of lactate to pyruvate. The sequence is that of L-lactate dehydrogenase from Geotalea daltonii (strain DSM 22248 / JCM 15807 / FRC-32) (Geobacter daltonii).